The chain runs to 184 residues: Dynactin subunit 6 (184 aa).

This sequence belongs to the dynactin subunits 5/6 family. Dynactin subunit 6 subfamily. Subunit of dynactin, a multiprotein complex part of a tripartite complex with dynein and a adapter, such as BICDL1, BICD2 or HOOK3. The dynactin complex is built around ACTR1A/ACTB filament and consists of an actin-related filament composed of a shoulder domain, a pointed end and a barbed end.

The protein resides in the cytoplasm. The protein localises to the cytoskeleton. Its function is as follows. Part of the dynactin complex that activates the molecular motor dynein for ultra-processive transport along microtubules. This Nematostella vectensis (Starlet sea anemone) protein is Dynactin subunit 6 (dctn6).